A 377-amino-acid chain; its full sequence is Chaperone protein DnaJ (377 aa).

One can recognise a J domain in the interval 5 to 70 (DYYELLGLQK…EKKAKYDQFG (66 aa)). The CR-type zinc-finger motif lies at 137–219 (GVEKEISVTR…CRGKGSVRKT (83 aa)). 8 residues coordinate Zn(2+): cysteine 150, cysteine 153, cysteine 167, cysteine 170, cysteine 193, cysteine 196, cysteine 207, and cysteine 210. CXXCXGXG motif repeat units follow at residues 150–157 (CEHCHGSG), 167–174 (CPTCSGSG), 193–200 (CDTCRGTG), and 207–214 (CSECRGKG).

The protein belongs to the DnaJ family. Homodimer. Zn(2+) serves as cofactor.

The protein localises to the cytoplasm. Participates actively in the response to hyperosmotic and heat shock by preventing the aggregation of stress-denatured proteins and by disaggregating proteins, also in an autonomous, DnaK-independent fashion. Unfolded proteins bind initially to DnaJ; upon interaction with the DnaJ-bound protein, DnaK hydrolyzes its bound ATP, resulting in the formation of a stable complex. GrpE releases ADP from DnaK; ATP binding to DnaK triggers the release of the substrate protein, thus completing the reaction cycle. Several rounds of ATP-dependent interactions between DnaJ, DnaK and GrpE are required for fully efficient folding. Also involved, together with DnaK and GrpE, in the DNA replication of plasmids through activation of initiation proteins. This chain is Chaperone protein DnaJ, found in Clostridium beijerinckii (strain ATCC 51743 / NCIMB 8052) (Clostridium acetobutylicum).